The sequence spans 135 residues: Antennal-specific protein OS-C (135 aa).

Residues 1–27 (MGFHMGRQLLLSGFLLVMLQMVTQTQA) form the signal peptide. The interval 43–84 (VIKREGDDDGDDDDSSSEETVEDSEESRRRRREVNTDNTPSA) is disordered. A compositionally biased stretch (acidic residues) spans 49-67 (DDDGDDDDSSSEETVEDSE).

As to expression, antenna. In the third antennal segment. Expressed in sencilla coeloconica.

The chain is Antennal-specific protein OS-C (Os-C) from Drosophila melanogaster (Fruit fly).